The sequence spans 42 residues: Photosystem I reaction center subunit IX (42 aa).

A helical membrane pass occupies residues 8–28 (YLSTAPVIGVLWMTFTAGFII).

It belongs to the PsaJ family.

Its subcellular location is the plastid. The protein localises to the chloroplast thylakoid membrane. In terms of biological role, may help in the organization of the PsaE and PsaF subunits. The sequence is that of Photosystem I reaction center subunit IX from Pyropia yezoensis (Susabi-nori).